A 407-amino-acid polypeptide reads, in one-letter code: Substance-P receptor (407 aa).

The Extracellular portion of the chain corresponds to 1–31 (MDNVLPMDSDLFPNISTNTSESNQFVQPTWQ). N-linked (GlcNAc...) asparagine glycosylation is found at Asn-14 and Asn-18. Residues 32–54 (IVLWAAAYTVIVVTSVVGNVVVI) form a helical membrane-spanning segment. Topologically, residues 55–64 (WIILAHKRMR) are cytoplasmic. A helical membrane pass occupies residues 65 to 86 (TVTNYFLVNLAFAEACMAAFNT). At 87-106 (VVNFTYAVHNVWYYGLFYCK) the chain is on the extracellular side. Cys-105 and Cys-180 are oxidised to a cystine. Residues 107-128 (FHNFFPIAALFASIYSMTAVAF) form a helical membrane-spanning segment. The Cytoplasmic portion of the chain corresponds to 129-148 (DRYMAIIHPLQPRLSATATK). The helical transmembrane segment at 149-169 (VVIFVIWVLALLLAFPQGYYS) threads the bilayer. At 170-194 (TTETMPSRVVCMIEWPEHPNRTYEK) the chain is on the extracellular side. Residues 195 to 219 (AYHICVTVLIYFLPLLVIGYAYTVV) form a helical membrane-spanning segment. The Cytoplasmic segment spans residues 220-248 (GITLWASEIPGDSSDRYHEQVSAKRKVVK). Residues 249 to 270 (MMIVVVCTFAICWLPFHVFFLL) traverse the membrane as a helical segment. Residues 271 to 283 (PYINPDLYLKKFI) lie on the Extracellular side of the membrane. A helical membrane pass occupies residues 284 to 308 (QQVYLASMWLAMSSTMYNPIIYCCL). Residues 309 to 407 (NDRFRLGFKH…SSSFYSNMLA (99 aa)) lie on the Cytoplasmic side of the membrane. Residue Cys-322 is the site of S-palmitoyl cysteine attachment. The segment at 362 to 407 (VGAHEEEPEEGPKATPSSLDLTSNGSSRSNSKTMTESSSFYSNMLA) is disordered. A compositionally biased stretch (polar residues) spans 376 to 407 (TPSSLDLTSNGSSRSNSKTMTESSSFYSNMLA).

Belongs to the G-protein coupled receptor 1 family. In terms of assembly, interacts with ARRB1.

It localises to the cell membrane. Functionally, this is a receptor for the tachykinin neuropeptide substance P. It is probably associated with G proteins that activate a phosphatidylinositol-calcium second messenger system. The rank order of affinity of this receptor to tachykinins is: substance P &gt; substance K &gt; neuromedin-K. This chain is Substance-P receptor (Tacr1), found in Rattus norvegicus (Rat).